A 275-amino-acid chain; its full sequence is MPELPEVETTRRGIDPVITGQTLRRLVVREPRMRWPIPADLPSLLTDRPVLATGRRGKYLLLRFEHGVQIVHLGMSGSLRRVAMDEAPRKHDHVDWVFDHAILRLHDPRRFGAVLWHPNTDGPVEAHPLLIGLGIEPFDPRFDGKWLHDHFRDKRVAVKQALLAGHAVVGVGNIYASECLFRAGIDPRTPAGKLSRPRCERLAQAVRATLADALASGGSTLRDYVGASGEPGAYFAIHAAVYERAGLACRVCGTPIRRLVQGQRATYFCPHCQKR.

Residue P2 is the Schiff-base intermediate with DNA of the active site. Residue E3 is the Proton donor of the active site. K58 serves as the catalytic Proton donor; for beta-elimination activity. Residues H91, R109, and K154 each contribute to the DNA site. The segment at 240 to 274 (AVYERAGLACRVCGTPIRRLVQGQRATYFCPHCQK) adopts an FPG-type zinc-finger fold. R264 functions as the Proton donor; for delta-elimination activity in the catalytic mechanism.

It belongs to the FPG family. In terms of assembly, monomer. Requires Zn(2+) as cofactor.

It catalyses the reaction Hydrolysis of DNA containing ring-opened 7-methylguanine residues, releasing 2,6-diamino-4-hydroxy-5-(N-methyl)formamidopyrimidine.. The catalysed reaction is 2'-deoxyribonucleotide-(2'-deoxyribose 5'-phosphate)-2'-deoxyribonucleotide-DNA = a 3'-end 2'-deoxyribonucleotide-(2,3-dehydro-2,3-deoxyribose 5'-phosphate)-DNA + a 5'-end 5'-phospho-2'-deoxyribonucleoside-DNA + H(+). Functionally, involved in base excision repair of DNA damaged by oxidation or by mutagenic agents. Acts as a DNA glycosylase that recognizes and removes damaged bases. Has a preference for oxidized purines, such as 7,8-dihydro-8-oxoguanine (8-oxoG). Has AP (apurinic/apyrimidinic) lyase activity and introduces nicks in the DNA strand. Cleaves the DNA backbone by beta-delta elimination to generate a single-strand break at the site of the removed base with both 3'- and 5'-phosphates. This Bordetella avium (strain 197N) protein is Formamidopyrimidine-DNA glycosylase.